The chain runs to 409 residues: Argininosuccinate synthase (409 aa).

Residues 10–18 (AYSGGLDTS) and Ala37 each bind ATP. Tyr90 and Ser95 together coordinate L-citrulline. ATP is bound at residue Gly120. Residues Thr122, Asn126, and Asp127 each coordinate L-aspartate. Asn126 contributes to the L-citrulline binding site. Positions 130, 182, 191, 267, and 279 each coordinate L-citrulline.

This sequence belongs to the argininosuccinate synthase family. Type 1 subfamily. As to quaternary structure, homotetramer.

The protein localises to the cytoplasm. The catalysed reaction is L-citrulline + L-aspartate + ATP = 2-(N(omega)-L-arginino)succinate + AMP + diphosphate + H(+). The protein operates within amino-acid biosynthesis; L-arginine biosynthesis; L-arginine from L-ornithine and carbamoyl phosphate: step 2/3. The sequence is that of Argininosuccinate synthase from Thiobacillus denitrificans (strain ATCC 25259 / T1).